The chain runs to 159 residues: Dihydrofolate reductase (159 aa).

The 158-residue stretch at Met1 to Arg158 folds into the DHFR domain. Residue Ile5 participates in substrate binding. NADP(+) contacts are provided by residues Ala7 and Val13 to Ala19. Residue Asp27 coordinates substrate. Residue Leu45–Thr46 coordinates NADP(+). Residues Arg52 and Arg57 each coordinate substrate. NADP(+) is bound by residues Ser63–Ser64, Lys76, and Gly95–Gln102. Thr113 contributes to the substrate binding site.

This sequence belongs to the dihydrofolate reductase family.

It catalyses the reaction (6S)-5,6,7,8-tetrahydrofolate + NADP(+) = 7,8-dihydrofolate + NADPH + H(+). Its pathway is cofactor biosynthesis; tetrahydrofolate biosynthesis; 5,6,7,8-tetrahydrofolate from 7,8-dihydrofolate: step 1/1. Functionally, key enzyme in folate metabolism. Catalyzes an essential reaction for de novo glycine and purine synthesis, and for DNA precursor synthesis. The chain is Dihydrofolate reductase (folA) from Klebsiella aerogenes (Enterobacter aerogenes).